The primary structure comprises 87 residues: Small ribosomal subunit protein bS20 (87 aa).

This sequence belongs to the bacterial ribosomal protein bS20 family.

In terms of biological role, binds directly to 16S ribosomal RNA. The chain is Small ribosomal subunit protein bS20 from Corynebacterium urealyticum (strain ATCC 43042 / DSM 7109).